The primary structure comprises 534 residues: GMP synthase [glutamine-hydrolyzing] (534 aa).

One can recognise a Glutamine amidotransferase type-1 domain in the interval 4–202; that stretch reads KILILDFGSQ…VLEIAKAQPD (199 aa). Residue C81 is the Nucleophile of the active site. Active-site residues include H176 and E178. The GMPS ATP-PPase domain maps to 203-402; it reads WVMKDHVAEA…LGLPHDMVYR (200 aa). An ATP-binding site is contributed by 230-236; it reads SGGVDSS.

Homodimer.

The enzyme catalyses XMP + L-glutamine + ATP + H2O = GMP + L-glutamate + AMP + diphosphate + 2 H(+). The protein operates within purine metabolism; GMP biosynthesis; GMP from XMP (L-Gln route): step 1/1. Functionally, catalyzes the synthesis of GMP from XMP. This is GMP synthase [glutamine-hydrolyzing] from Methylibium petroleiphilum (strain ATCC BAA-1232 / LMG 22953 / PM1).